Here is a 322-residue protein sequence, read N- to C-terminus: Ribosomal RNA small subunit methyltransferase H (322 aa).

S-adenosyl-L-methionine contacts are provided by residues G40–H42, D60, F84, D106, and Q113.

It belongs to the methyltransferase superfamily. RsmH family.

Its subcellular location is the cytoplasm. It catalyses the reaction cytidine(1402) in 16S rRNA + S-adenosyl-L-methionine = N(4)-methylcytidine(1402) in 16S rRNA + S-adenosyl-L-homocysteine + H(+). Its function is as follows. Specifically methylates the N4 position of cytidine in position 1402 (C1402) of 16S rRNA. This chain is Ribosomal RNA small subunit methyltransferase H, found in Aggregatibacter aphrophilus (strain NJ8700) (Haemophilus aphrophilus).